A 451-amino-acid polypeptide reads, in one-letter code: Ammonium transporter Rh type B (451 aa).

Residues 1-11 (MADVSTSMRLK) lie on the Cytoplasmic side of the membrane. The chain crosses the membrane as a helical span at residues 12–32 (LPVVCFILEIILIILFGALVQ). The Extracellular segment spans residues 33 to 63 (YDYETDAKEWHNQSHNDYENDFYFRYPSFQD). An N-linked (GlcNAc...) asparagine glycan is attached at asparagine 44. The helical transmembrane segment at 64-84 (VHVMIFIGFGFLMTFLQKYGF) threads the bilayer. Residues 85–87 (GSV) are Cytoplasmic-facing. Residues 88–108 (GFNFLIAAFSLQWATLMQGFF) form a helical membrane-spanning segment. The Extracellular portion of the chain corresponds to 109–121 (HGMHGGKIHVGVE). A helical transmembrane segment spans residues 122 to 142 (SMINADFCTGSVLISFGAVLG). The Cytoplasmic portion of the chain corresponds to 143 to 151 (KTSPIQLLT). The helical transmembrane segment at 152–172 (MAMFEVTLFAVNEFILLSLLG) threads the bilayer. Topologically, residues 173-176 (TRDA) are extracellular. A helical transmembrane segment spans residues 177-197 (GGSMTIHTFGAYFGLMVTRIL). Residues 198 to 216 (YRPHLDKSKHRNSSVYHSD) lie on the Cytoplasmic side of the membrane. A helical membrane pass occupies residues 217 to 237 (LFAMIGTIYLWMFWPSFNSAI). Topologically, residues 238-247 (TAHGDDQHRT) are extracellular. A helical membrane pass occupies residues 248–270 (ALNTYYSLAACTLATYGMSAVTS). Topologically, residues 271-274 (HDGK) are cytoplasmic. A helical membrane pass occupies residues 275–295 (LDMVHIQNAALAGGVAVGTAG). Topologically, residues 296 to 298 (EMM) are extracellular. Residues 299 to 319 (LTPFGSMIVGFLAGIISVLGF) traverse the membrane as a helical segment. Topologically, residues 320–340 (KFLSPILESKLKIQDTCGVHN) are cytoplasmic. The helical transmembrane segment at 341–361 (LHGMPGVLGAIVGAVTAALAT) threads the bilayer. Topologically, residues 362–390 (MDVYGKGMEDVFPAVADGSIDASKQGGVQ) are extracellular. Residues 391–411 (ALSLAITLGIALLGGLIVVFG) traverse the membrane as a helical segment. Residues 412–451 (TPPDTLCFEDGVYWEVPESEAPHEAQLTTVRTEETEKLSS) are Cytoplasmic-facing.

This sequence belongs to the ammonium transporter (TC 2.A.49) family. Rh subfamily.

Its subcellular location is the basolateral cell membrane. The protein resides in the cytoplasmic vesicle membrane. Functionally, functions as an ammonia transporter. May play a role in the elimination of ammonia in the gill. In Tetraodon nigroviridis (Spotted green pufferfish), this protein is Ammonium transporter Rh type B (rhbg).